A 243-amino-acid chain; its full sequence is HTH-type quorum sensing-dependent transcriptional regulator RpaR (243 aa).

Residues 174–239 (KPIRRNRLTP…AAVAKALTLG (66 aa)) enclose the HTH luxR-type domain. The segment at residues 198-217 (AWEISVILCITERTVKFHLI) is a DNA-binding region (H-T-H motif).

It belongs to the autoinducer-regulated transcriptional regulatory protein family.

Its function is as follows. Responds to the quorum-sensing autoinducer 4-coumaroyl-homoserine lactone to regulate expression of several genes. Represses expression of rpaI in the absence of the inducer. The polypeptide is HTH-type quorum sensing-dependent transcriptional regulator RpaR (Rhodopseudomonas palustris (strain ATCC BAA-98 / CGA009)).